Consider the following 416-residue polypeptide: Enolase (416 aa).

Gln160 lines the (2R)-2-phosphoglycerate pocket. The active-site Proton donor is Glu204. Asp239, Glu280, and Asp306 together coordinate Mg(2+). Residues Lys331, Arg360, Ser361, and Lys382 each coordinate (2R)-2-phosphoglycerate. Lys331 (proton acceptor) is an active-site residue.

The protein belongs to the enolase family. The cofactor is Mg(2+).

It localises to the cytoplasm. The protein resides in the secreted. Its subcellular location is the cell surface. It catalyses the reaction (2R)-2-phosphoglycerate = phosphoenolpyruvate + H2O. It functions in the pathway carbohydrate degradation; glycolysis; pyruvate from D-glyceraldehyde 3-phosphate: step 4/5. Catalyzes the reversible conversion of 2-phosphoglycerate (2-PG) into phosphoenolpyruvate (PEP). It is essential for the degradation of carbohydrates via glycolysis. This chain is Enolase, found in Sulfurisphaera tokodaii (strain DSM 16993 / JCM 10545 / NBRC 100140 / 7) (Sulfolobus tokodaii).